A 296-amino-acid polypeptide reads, in one-letter code: Peptide transport system permease protein SapC (296 aa).

Over 1-28 (MPYDSVYSEKRPPGTLRTAWRKFYSDAS) the chain is Cytoplasmic. Residues 29–49 (AMVGLYGCAGLAVLCIFGGWF) form a helical membrane-spanning segment. Over 50 to 98 (APYGIDQQFLGYQLLPPSWSRYGEVSFFLGTDDLGRDVLSRLLSGAAPT) the chain is Periplasmic. The chain crosses the membrane as a helical span at residues 99–119 (VGGAFVVTLAATICGLVLGTF). The ABC transmembrane type-1 domain occupies 99-284 (VGGAFVVTLA…ISVLLVNLLG (186 aa)). Over 120 to 133 (AGATHGLRSAVLNH) the chain is Cytoplasmic. Residues 134-154 (ILDTLLAIPSLLLAIIVVAFA) form a helical membrane-spanning segment. Over 155-196 (GPSLSHAMFAVWLALLPRMVRSIYSMVHDELEKEYVIAARLD) the chain is Periplasmic. A helical membrane pass occupies residues 197 to 217 (GASTLNILWFAVMPNITAGLV). Residues 218-222 (TEITR) are Cytoplasmic-facing. The chain crosses the membrane as a helical span at residues 223–243 (ALSMAILDIAALGFLDLGAQL). The Periplasmic segment spans residues 244 to 257 (PSPEWGAMLGDALE). The helical transmembrane segment at 258–278 (LIYVAPWTVMLPGAAIMISVL) threads the bilayer. Residues 279–296 (LVNLLGDGVRRAIIAGVE) lie on the Cytoplasmic side of the membrane.

This sequence belongs to the binding-protein-dependent transport system permease family. OppBC subfamily.

The protein resides in the cell inner membrane. Involved in a peptide intake transport system that plays a role in the resistance to antimicrobial peptides. The chain is Peptide transport system permease protein SapC (sapC) from Escherichia coli O6:H1 (strain CFT073 / ATCC 700928 / UPEC).